Reading from the N-terminus, the 806-residue chain is WEB family protein At3g02930, chloroplastic (806 aa).

The transit peptide at 1-78 (MASKIKNGLS…PTPPEKTQIR (78 aa)) directs the protein to the chloroplast. Disordered regions lie at residues 1 to 94 (MASK…QIKE) and 380 to 403 (KSEQKLGIAEEESSKSEKEAEKLK). Low complexity predominate over residues 9 to 22 (LSDTTLRKSSSTSL). Residues 34–59 (PDSNSPSPTQQQSRLSFERPSSNSKP) are compositionally biased toward polar residues. Coiled coils occupy residues 88 to 530 (QSVQ…FESA), 585 to 662 (DCLK…IEEN), and 698 to 757 (ETLD…EDLN). Residues 391 to 403 (ESSKSEKEAEKLK) are compositionally biased toward basic and acidic residues. 2 disordered regions span residues 684–725 (ENGY…EDET) and 746–777 (KESAKEEEEDLNVVDQSQKTSPVNGLTGEDEL). 2 stretches are compositionally biased toward basic and acidic residues: residues 685-699 (NGYRSAEEKSSKVET) and 706-725 (KLEEDTEKKEKKERSPEDET). The span at 759–769 (VDQSQKTSPVN) shows a compositional bias: polar residues.

The protein belongs to the WEB family.

It is found in the plastid. The protein resides in the chloroplast. In Arabidopsis thaliana (Mouse-ear cress), this protein is WEB family protein At3g02930, chloroplastic.